The following is a 229-amino-acid chain: Potassium/proton antiporter CemA (229 aa).

The next 3 helical transmembrane spans lie at 7–27 (FLPL…SLSF), 106–126 (MILH…YSIL), and 189–209 (IISG…KYWI).

Belongs to the CemA family.

The protein localises to the plastid. It localises to the chloroplast inner membrane. The catalysed reaction is K(+)(in) + H(+)(out) = K(+)(out) + H(+)(in). Contributes to K(+)/H(+) antiport activity by supporting proton efflux to control proton extrusion and homeostasis in chloroplasts in a light-dependent manner to modulate photosynthesis. Prevents excessive induction of non-photochemical quenching (NPQ) under continuous-light conditions. Indirectly promotes efficient inorganic carbon uptake into chloroplasts. The protein is Potassium/proton antiporter CemA of Eucalyptus globulus subsp. globulus (Tasmanian blue gum).